The primary structure comprises 202 residues: Pyridoxal 5'-phosphate synthase subunit PdxT (202 aa).

48–50 (GES) contributes to the L-glutamine binding site. Residue Cys80 is the Nucleophile of the active site. Residues Arg112 and 139-140 (IR) contribute to the L-glutamine site. Active-site charge relay system residues include His180 and Glu182.

The protein belongs to the glutaminase PdxT/SNO family. In the presence of PdxS, forms a dodecamer of heterodimers. Only shows activity in the heterodimer.

The catalysed reaction is aldehydo-D-ribose 5-phosphate + D-glyceraldehyde 3-phosphate + L-glutamine = pyridoxal 5'-phosphate + L-glutamate + phosphate + 3 H2O + H(+). It carries out the reaction L-glutamine + H2O = L-glutamate + NH4(+). The protein operates within cofactor biosynthesis; pyridoxal 5'-phosphate biosynthesis. Functionally, catalyzes the hydrolysis of glutamine to glutamate and ammonia as part of the biosynthesis of pyridoxal 5'-phosphate. The resulting ammonia molecule is channeled to the active site of PdxS. The chain is Pyridoxal 5'-phosphate synthase subunit PdxT from Hyperthermus butylicus (strain DSM 5456 / JCM 9403 / PLM1-5).